The chain runs to 89 residues: Small ribosomal subunit protein uS15 (89 aa).

Belongs to the universal ribosomal protein uS15 family. As to quaternary structure, part of the 30S ribosomal subunit. Forms a bridge to the 50S subunit in the 70S ribosome, contacting the 23S rRNA.

In terms of biological role, one of the primary rRNA binding proteins, it binds directly to 16S rRNA where it helps nucleate assembly of the platform of the 30S subunit by binding and bridging several RNA helices of the 16S rRNA. Its function is as follows. Forms an intersubunit bridge (bridge B4) with the 23S rRNA of the 50S subunit in the ribosome. The sequence is that of Small ribosomal subunit protein uS15 from Roseiflexus sp. (strain RS-1).